The primary structure comprises 348 residues: Protein RecA (348 aa).

An ATP-binding site is contributed by 66–73 (GPESSGKT).

The protein belongs to the RecA family.

It is found in the cytoplasm. Functionally, can catalyze the hydrolysis of ATP in the presence of single-stranded DNA, the ATP-dependent uptake of single-stranded DNA by duplex DNA, and the ATP-dependent hybridization of homologous single-stranded DNAs. It interacts with LexA causing its activation and leading to its autocatalytic cleavage. In Neisseria meningitidis serogroup C / serotype 2a (strain ATCC 700532 / DSM 15464 / FAM18), this protein is Protein RecA.